Reading from the N-terminus, the 231-residue chain is NADH-ubiquinone oxidoreductase chain 4 (231 aa).

7 consecutive transmembrane segments (helical) span residues 1–21 (PIAGSMVLAAILLKLGGYGMI), 34–54 (MFIPFITLSLWGAVLANLTCL), 62–82 (LIAYSSISHMGLVVAAISIQT), 86–106 (LSGAMALMIAHGFTSSALFCL), 118–138 (ILILTRGFHNILPMTTTWWLL), 169–189 (TIILLSLSILITSIYSLHIFL), and 211–231 (LLMTLHIIPLILLSMKPELVM).

Belongs to the complex I subunit 4 family.

It localises to the mitochondrion membrane. The enzyme catalyses a ubiquinone + NADH + 5 H(+)(in) = a ubiquinol + NAD(+) + 4 H(+)(out). Functionally, core subunit of the mitochondrial membrane respiratory chain NADH dehydrogenase (Complex I) that is believed to belong to the minimal assembly required for catalysis. Complex I functions in the transfer of electrons from NADH to the respiratory chain. The immediate electron acceptor for the enzyme is believed to be ubiquinone. The polypeptide is NADH-ubiquinone oxidoreductase chain 4 (MT-ND4) (Causus rhombeatus (Rhombic night adder)).